The sequence spans 907 residues: Leucine-rich repeat-containing G-protein coupled receptor 5 (907 aa).

An N-terminal signal peptide occupies residues 1-21 (MDTSCVHMLLSLLALLQLVAA). At 22–561 (GSSPGPDAIP…EHLFGSWLIR (540 aa)) the chain is on the extracellular side. Positions 25–66 (PGPDAIPRGCPSHCHCELDGRMLLRVDCSDLGLSELPSNLSV) constitute an LRRNT domain. 2 disulfides stabilise this stretch: C34–C40 and C38–C52. N-linked (GlcNAc...) asparagine glycosylation is found at N63 and N77. LRR repeat units follow at residues 67–88 (FTSYLDLSMNNISQLPASLLHR), 91–112 (FLEELRLAGNALTHIPKGAFTG), 115–136 (SLKVLMLQNNQLRQVPEEALQN), 139–160 (SLQSLRLDANHISYVPPSCFSG), 163–184 (SLRHLWLDDNALTDVPVQAFRS), 187–208 (ALQAMTLALNKIHHIADYAFGN), 211–232 (SLVVLHLHNNRIHSLGKKCFDG), 235–256 (SLETLDLNYNNLDEFPTAIKTL), 258–279 (NLKELGFHSNNIRSIPERAFVG), 282–303 (SLITIHFYDNPIQFVGVSAFQH), 306–325 (ELRTLTLNGASHITEFPHLT), 329–350 (TLESLTLTGAKISSLPQAVCDQ), 353–374 (NLQVLDLSYNLLEDLPSLSGCQ), 375–396 (KLQKIDLRHNEIYEIKGSTFQQ), 399–420 (NLRSLNLAWNKIAIIHPNAFST), and 423–446 (SLIKLDLSSNLLSSFPVTGLHGLT). A glycan (N-linked (GlcNAc...) asparagine) is linked at N208. A disulfide bond links C348 and C373. Residues C479 and C541 are joined by a disulfide bond. Residues 562 to 582 (IGVWTTAVLALSCNALVALTV) form a helical membrane-spanning segment. Residues 583 to 593 (FRTPLYISSIK) lie on the Cytoplasmic side of the membrane. Residues 594–614 (LLIGVIAVVDILMGVSSAVLA) form a helical membrane-spanning segment. Over 615 to 638 (AVDAFTFGRFAQHGAWWEDGIGCQ) the chain is Extracellular. An intrachain disulfide couples C637 to C712. A helical membrane pass occupies residues 639–659 (IVGFLSIFASESSIFLLTLAA). Topologically, residues 660–682 (LERGFSVKCSSKFEVKAPLFSLR) are cytoplasmic. Residues 683 to 703 (AIVLLCVLLALTIATIPLLGG) traverse the membrane as a helical segment. At 704–723 (SKYNASPLCLPLPFGEPSTT) the chain is on the extracellular side. Residues 724 to 744 (GYMVALVLLNSLCFLIMTIAY) form a helical membrane-spanning segment. The Cytoplasmic segment spans residues 745–767 (TKLYCSLEKGELENLWDCSMVKH). A helical transmembrane segment spans residues 768–788 (IALLLFANCILYCPVAFLSFS). The Extracellular portion of the chain corresponds to 789-802 (SLLNLTFISPDVIK). Residue N792 is glycosylated (N-linked (GlcNAc...) asparagine). Residues 803–823 (FILLVIVPLPSCLNPLLYIVF) traverse the membrane as a helical segment. Residues 824–907 (NPHFKEDMGS…LSSVAFVPCL (84 aa)) are Cytoplasmic-facing.

This sequence belongs to the G-protein coupled receptor 1 family. Identified in a complex composed of RNF43, LGR5 and RSPO1. Also interacts with other R-spondin ligands, including RSPO2, RSPO3 and RSPO4. As to expression, expressed in the intestinal epithelium (at protein level). Expressed in the gonads, the adrenal gland, and in the brain. In the central nervous system expression is restricted to the olfactory bulb. In the adrenal gland detected only in the neural-crest derived chromaffin cells of the medulla, but not in the cells of the adrenal cortex. In the gonads, the expression is high in Graafian follicle, but absent from primary and secondary follicles. In the intestine, exclusively expressed in cycling crypt base columnar cells. Expressed in the lower bulge and secondary germ area of telogen hair follicles and in the lower outer root sheath of anagen hair follicle.

It is found in the cell membrane. Its subcellular location is the golgi apparatus. The protein localises to the trans-Golgi network membrane. Receptor for R-spondins that potentiates the canonical Wnt signaling pathway and acts as a stem cell marker of the intestinal epithelium and the hair follicle. Upon binding to R-spondins (RSPO1, RSPO2, RSPO3 or RSPO4), associates with phosphorylated LRP6 and frizzled receptors that are activated by extracellular Wnt receptors, triggering the canonical Wnt signaling pathway to increase expression of target genes. In contrast to classical G-protein coupled receptors, does not activate heterotrimeric G-proteins to transduce the signal. Involved in the development and/or maintenance of the adult intestinal stem cells during postembryonic development. The sequence is that of Leucine-rich repeat-containing G-protein coupled receptor 5 (Lgr5) from Mus musculus (Mouse).